A 411-amino-acid polypeptide reads, in one-letter code: Gamma-glutamyl phosphate reductase (411 aa).

This sequence belongs to the gamma-glutamyl phosphate reductase family.

Its subcellular location is the cytoplasm. The catalysed reaction is L-glutamate 5-semialdehyde + phosphate + NADP(+) = L-glutamyl 5-phosphate + NADPH + H(+). It functions in the pathway amino-acid biosynthesis; L-proline biosynthesis; L-glutamate 5-semialdehyde from L-glutamate: step 2/2. Catalyzes the NADPH-dependent reduction of L-glutamate 5-phosphate into L-glutamate 5-semialdehyde and phosphate. The product spontaneously undergoes cyclization to form 1-pyrroline-5-carboxylate. This is Gamma-glutamyl phosphate reductase from Wolinella succinogenes (strain ATCC 29543 / DSM 1740 / CCUG 13145 / JCM 31913 / LMG 7466 / NCTC 11488 / FDC 602W) (Vibrio succinogenes).